The sequence spans 1480 residues: Cystic fibrosis transmembrane conductance regulator (1480 aa).

The Cytoplasmic segment spans residues 1-77 (MQRSPLEKAS…KLINALRRCF (77 aa)). The helical transmembrane segment at 78 to 98 (FWRFMFYGIFLYLGEVTKAVQ) threads the bilayer. The ABC transmembrane type-1 1 domain occupies 81 to 365 (FMFYGIFLYL…WAVQTWYDSL (285 aa)). At 99–122 (PLLLGRIIASYDPDNKEERSIAIY) the chain is on the extracellular side. A helical transmembrane segment spans residues 123 to 146 (LGIGLCLLFIVRTLLLHPAIFGLH). At 147–195 (HIGMQMRIAMFSLIYKKTLKLSSRVLDKISIGQLVSLLSNNLNKFDEGL) the chain is on the cytoplasmic side. A helical transmembrane segment spans residues 196-216 (ALAHFVWIAPLQVALLMGLIW). Residues 217 to 222 (ELLQAS) lie on the Extracellular side of the membrane. A helical transmembrane segment spans residues 223 to 243 (AFCGLGFLIVLALFQAGLGRM). Residues 244 to 298 (MMKYRDQRAGKINERLVITSEMIENIQSVKAYCWEEAMEKMIENLRQTELKLTRK) lie on the Cytoplasmic side of the membrane. The helical transmembrane segment at 299–319 (AAYVRYFNSSAFFFSGFFVVF) threads the bilayer. The Extracellular segment spans residues 320–339 (LSVLPYALIKGIVLRKIFTT). Residues 340–358 (ISFCIVLRMAVTRQFPWAV) form a helical membrane-spanning segment. Topologically, residues 359–858 (QTWYDSLGAI…YLRYITVHKS (500 aa)) are cytoplasmic. ATP contacts are provided by residues Trp401, Ser434, 458-465 (GSTGAGKT), and Gln493. One can recognise an ABC transporter 1 domain in the interval 423–646 (NGDDSLFFSN…RPDFSSKLMG (224 aa)). A lipid anchor (S-palmitoyl cysteine) is attached at Cys524. Phosphoserine occurs at positions 549 and 660. The interval 654 to 831 (SAERRNSILT…EEINEEDLKE (178 aa)) is disordered R region. Position 670 is a phosphoserine; by PKA (Ser670). A Glycyl lysine isopeptide (Lys-Gly) (interchain with G-Cter in ubiquitin) cross-link involves residue Lys688. Residues Ser700 and Ser712 each carry the phosphoserine modification. Phosphothreonine is present on Thr717. Phosphoserine is present on residues Ser737, Ser753, Ser768, Ser790, Ser795, and Ser813. The chain crosses the membrane as a helical span at residues 859–879 (LIFVLIWCLVIFLAEVAASLV). Residues 859 to 1155 (LIFVLIWCLV…AVNSSIDVDS (297 aa)) form the ABC transmembrane type-1 2 domain. At 880–918 (VLWLLGNTPLQDKGNSTHSRNNSYAVIITSTSSYYVFYI) the chain is on the extracellular side. 2 N-linked (GlcNAc...) asparagine glycosylation sites follow: Asn894 and Asn900. Residues 919–939 (YVGVADTLLAMGFFRGLPLVH) traverse the membrane as a discontinuously helical segment. The Cytoplasmic portion of the chain corresponds to 940–990 (TLITVSKILHNKMLHSVLQAPMSTLNTLKAGGILNRFSKDIAILDDLLPLT). A helical transmembrane segment spans residues 991–1011 (IFDFIQLLLIVIGAIAVVAVL). At 1012 to 1013 (QP) the chain is on the extracellular side. A helical membrane pass occupies residues 1014-1034 (YIFVATVPVIVAFIMLRAYFL). Over 1035 to 1095 (QTSQQLKQLE…TANWFLYLST (61 aa)) the chain is Cytoplasmic. A helical transmembrane segment spans residues 1096 to 1116 (LRWFQMRIEMIFVIFFIAVTF). At 1117–1130 (ISILTTGEGEGRVG) the chain is on the extracellular side. A helical transmembrane segment spans residues 1131-1151 (IILTLAMNIMSTLQWAVNSSI). Residues 1152-1480 (DVDSLMRSVS…TEEEVQDTRL (329 aa)) are Cytoplasmic-facing. An ABC transporter 2 domain is found at 1210 to 1443 (MTVKDLTAKY…RSLFQQAISP (234 aa)). ATP-binding positions include Tyr1219 and 1244-1251 (GRTGSGKS). Positions 1386–1480 (RTLKQAFADC…TEEEVQDTRL (95 aa)) are interaction with GORASP2. Cys1395 carries the S-palmitoyl cysteine lipid modification. Phosphoserine is present on residues Ser1444 and Ser1456. Residues 1452 to 1480 (HRNSSKCKSKPQIAALKEETEEEVQDTRL) form a disordered region. A compositionally biased stretch (acidic residues) spans 1470–1480 (ETEEEVQDTRL). A PDZ-binding motif is present at residues 1478–1480 (TRL).

Belongs to the ABC transporter superfamily. ABCC family. CFTR transporter (TC 3.A.1.202) subfamily. Monomer; does not require oligomerization for channel activity. May form oligomers in the membrane. Interacts with SLC26A3, SLC26A6 and NHERF1. Interacts with SHANK2. Interacts with MYO6. Interacts (via C-terminus) with GOPC (via PDZ domain); this promotes CFTR internalization and thereby decreases channel activity. Interacts with SLC4A7 through NHERF1. Found in a complex with MYO5B and RAB11A. Interacts with ANO1. Interacts with SLC26A8. Interacts with AHCYL1; the interaction increases CFTR activity. Interacts with CSE1L. The core-glycosylated form interacts with GORASP2 (via PDZ GRASP-type 1 domain) in respone to ER stress. Interacts with MARCHF2; the interaction leads to CFTR ubiqtuitination and degradation. Interacts with ADGRG2. In terms of processing, N-glycosylated. Phosphorylated; cAMP treatment promotes phosphorylation and activates the channel. Dephosphorylation decreases the ATPase activity (in vitro). Phosphorylation at PKA sites activates the channel. Phosphorylation at PKC sites enhances the response to phosphorylation by PKA. Phosphorylated by AMPK; this inhibits channel activity. Post-translationally, ubiquitinated, leading to its degradation in the lysosome. Deubiquitination by USP10 in early endosomes enhances its endocytic recycling to the cell membrane. Ubiquitinated by RNF185 during ER stress. Ubiquitinated by MARCHF2.

It localises to the apical cell membrane. The protein resides in the early endosome membrane. The protein localises to the cell membrane. It is found in the recycling endosome membrane. Its subcellular location is the endoplasmic reticulum membrane. It localises to the nucleus. It catalyses the reaction ATP + H2O + closed Cl(-) channel = ADP + phosphate + open Cl(-) channel.. The catalysed reaction is chloride(in) = chloride(out). The enzyme catalyses hydrogencarbonate(in) = hydrogencarbonate(out). It carries out the reaction ATP + H2O = ADP + phosphate + H(+). In terms of biological role, epithelial ion channel that plays an important role in the regulation of epithelial ion and water transport and fluid homeostasis. Mediates the transport of chloride ions across the cell membrane. Possesses an intrinsic ATPase activity and utilizes ATP to gate its channel; the passive flow of anions through the channel is gated by cycles of ATP binding and hydrolysis by the ATP-binding domains. The ion channel is also permeable to HCO(3)(-); selectivity depends on the extracellular chloride concentration. Exerts its function also by modulating the activity of other ion channels and transporters. Contributes to the regulation of the pH and the ion content of the epithelial fluid layer. Modulates the activity of the epithelial sodium channel (ENaC) complex, in part by regulating the cell surface expression of the ENaC complex. May regulate bicarbonate secretion and salvage in epithelial cells by regulating the transporter SLC4A7. Can inhibit the chloride channel activity of ANO1. Plays a role in the chloride and bicarbonate homeostasis during sperm epididymal maturation and capacitation. The polypeptide is Cystic fibrosis transmembrane conductance regulator (Pongo abelii (Sumatran orangutan)).